Here is a 460-residue protein sequence, read N- to C-terminus: UDP-N-acetylmuramoylalanine--D-glutamate ligase (460 aa).

117-123 (GTNGKTT) lines the ATP pocket.

The protein belongs to the MurCDEF family.

It localises to the cytoplasm. The enzyme catalyses UDP-N-acetyl-alpha-D-muramoyl-L-alanine + D-glutamate + ATP = UDP-N-acetyl-alpha-D-muramoyl-L-alanyl-D-glutamate + ADP + phosphate + H(+). Its pathway is cell wall biogenesis; peptidoglycan biosynthesis. Functionally, cell wall formation. Catalyzes the addition of glutamate to the nucleotide precursor UDP-N-acetylmuramoyl-L-alanine (UMA). The sequence is that of UDP-N-acetylmuramoylalanine--D-glutamate ligase from Prochlorococcus marinus (strain MIT 9313).